A 282-amino-acid polypeptide reads, in one-letter code: BURP domain-containing protein BNM2A (282 aa).

Residues 1-26 (MASLRFSVTFPALLSLLLLSLWVVEA) form the signal peptide. Residues 60-282 (FFKISDLKLG…PLDNIVWVSK (223 aa)) enclose the BURP domain.

Expressed in the radicle and cotyledon of germinating seeds 2 days post-imbibition (DPI), in stems and roots of 30-DPI young plants and in floral buds, but not in fully open flowers or leaves. Expressed in the embryo and seed coat tissues of developing seeds. The protein accumulates only in seeds and only long after transcript accumulation becomes evident.

It localises to the protein storage vacuole. The protein is BURP domain-containing protein BNM2A of Brassica napus (Rape).